We begin with the raw amino-acid sequence, 465 residues long: MTRSSLARAPVLLHIGAGSFHRAHQAWYLHRVNAAVPPGERWTLTVGNIRDDMHATLAALAAQQGAYTLETVTPQGERAYETIRSIARVLPWSADLAALINTGADPACRIVSFTVTEGGYYLDEHDRLDVTHPDLAADLRGARSTLYGALAALLAERRQRGAGPLTLQSCDNLRSNGARFRAGMRAFLALRGDAALLAWFDANVSCPSAMVDRITPRPTDDVRTRVHAATGVDDRCPVMGESFIQWVIEDNFIAGRPAWEIAGAEIVADVHPYEEAKIRILNATHSCIAWAGTLAGLTYIHEGMRDAAIYRFAYDYVTDDVIPCLTPSPLDLERYRDVVLERFGNPYVLDTNQRVAADGFSKIPGFIAPTLAECFARGADPVATAVLPALFLGFLEGWARGTLPYVYQDGVMDGAAARSIVEAPDSVAAFCSDRQLWGSLAGRDALVQAVRAGRARVEAWRAARR.

It belongs to the mannitol dehydrogenase family.

It carries out the reaction D-arabinitol + NAD(+) = D-xylulose + NADH + H(+). It functions in the pathway carbohydrate metabolism; D-arabinitol metabolism. This Ralstonia nicotianae (strain ATCC BAA-1114 / GMI1000) (Ralstonia solanacearum) protein is D-arabinitol 4-dehydrogenase (dalD).